A 464-amino-acid chain; its full sequence is Neuronal acetylcholine receptor subunit beta-3 (464 aa).

The first 30 residues, 1–30 (MTGFLRVFLVLSATLSGSWVTLTATAGLSS), serve as a signal peptide directing secretion. At 31-238 (VAEHEDALLR…VTYSFVLRRL (208 aa)) the chain is on the extracellular side. 2 N-linked (GlcNAc...) asparagine glycosylation sites follow: Asn55 and Asn172. Cys159 and Cys173 are oxidised to a cystine. The next 3 helical transmembrane spans lie at 239-263 (PLFY…VFYL), 271-288 (LSLS…LLVI), and 305-326 (YLLF…VINV). The Cytoplasmic segment spans residues 327–434 (HHRSSSTYHP…WKFVAQVLDR (108 aa)). A helical transmembrane segment spans residues 435–453 (IFLWLFLIASVLGSILIFI).

The protein belongs to the ligand-gated ion channel (TC 1.A.9) family. Acetylcholine receptor (TC 1.A.9.1) subfamily. Beta-3/CHRNB3 sub-subfamily. In terms of assembly, neuronal AChR seems to be composed of two different type of subunits: alpha and beta. CHRNB3/beta-3 subunit is only able to form functional nAChRs when co-assembled with another beta subunit. Participates in pentameric assemblies along with CHRNA4/alpha-4 and CHRNB2/beta-2 subunits and with CHRNA6/alpha-6 as well, forming stoichiometries such as (CHRNA3:CHRNB4)2:CHRNB3, (CHRNA4:CHRNB2)2:CHRNB3 or (CHRNA6:CHRNB2)2:CHRNB3.

It is found in the synaptic cell membrane. The protein resides in the cell membrane. The enzyme catalyses Ca(2+)(in) = Ca(2+)(out). It carries out the reaction K(+)(in) = K(+)(out). The catalysed reaction is Na(+)(in) = Na(+)(out). With respect to regulation, activated by a myriad of ligands such as acetylcholine, cytisine, nicotine, choline and epibatidine. Component of neuronal acetylcholine receptors (nAChRs) that function as pentameric, ligand-gated cation channels with high calcium permeability among other activities. nAChRs are excitatory neurotrasnmitter receptors formed by a collection of nAChR subunits known to mediate synaptic transmission in the nervous system and the neuromuscular junction. Each nAchR subunit confers differential attributes to channel properties, including activation, deactivation and desensitization kinetics, pH sensitivity, cation permeability, and binding to allosteric modulators. Has an accessory rather than functional role and is only able to form functional nAChRs when co-assembled with another beta subunit. Participates in pentameric assemblies along with CHRNA3, CHRNA4, CHRNA6, CHRNB2 and CHRNB4. Modulates receptor assembly and increases receptor sensitivity to nicotine when associated with CHRNB2, CHRNA4 and/or CHRNA6 as well as CHRNA3 and CHRNB4. Seems to play a role in nicotine addiction. The sequence is that of Neuronal acetylcholine receptor subunit beta-3 (Chrnb3) from Rattus norvegicus (Rat).